The primary structure comprises 278 residues: Large ribosomal subunit protein uL2 (278 aa).

The tract at residues Ala-208 to Lys-278 is disordered. Residues Gly-209–Gln-219 show a composition bias toward basic residues. Residues Lys-258 to Ile-270 are compositionally biased toward basic and acidic residues.

The protein belongs to the universal ribosomal protein uL2 family. As to quaternary structure, part of the 50S ribosomal subunit. Forms a bridge to the 30S subunit in the 70S ribosome.

One of the primary rRNA binding proteins. Required for association of the 30S and 50S subunits to form the 70S ribosome, for tRNA binding and peptide bond formation. It has been suggested to have peptidyltransferase activity; this is somewhat controversial. Makes several contacts with the 16S rRNA in the 70S ribosome. This Lactobacillus delbrueckii subsp. bulgaricus (strain ATCC 11842 / DSM 20081 / BCRC 10696 / JCM 1002 / NBRC 13953 / NCIMB 11778 / NCTC 12712 / WDCM 00102 / Lb 14) protein is Large ribosomal subunit protein uL2.